The sequence spans 323 residues: Palmitoyltransferase ZDHHC20-B (323 aa).

Residues 1 to 14 (MAPTHVLRCCQRGL) lie on the Cytoplasmic side of the membrane. A helical membrane pass occupies residues 15-35 (AWIPVIFIALVVCWSYYAYVV). Topologically, residues 36 to 41 (ELCLLV) are lumenal. The helical transmembrane segment at 42 to 62 (YLVVFHLSFVMFVWSYWKTIF) threads the bilayer. Residues 63–157 (TKPANPSKEF…NNCVGFSNYK (95 aa)) lie on the Cytoplasmic side of the membrane. Positions 114-164 (RYCDRCQVIKPDRCHHCSACDMCVLKMDHHCPWVNNCVGFSNYKFFILFLT) constitute a DHHC domain. The active-site S-palmitoyl cysteine intermediate is the Cys-144. Residues 158–178 (FFILFLTYSLVYCLFIAASVL) traverse the membrane as a helical segment. Residues 179–195 (QYFIKFWTSDLPESHAK) lie on the Lumenal side of the membrane. The chain crosses the membrane as a helical span at residues 196–219 (FHVLFLFFVAAMFCISILSLFTYH). Residues 220–323 (LWLVGKNRST…KQAKKKKTDE (104 aa)) lie on the Cytoplasmic side of the membrane.

The protein belongs to the DHHC palmitoyltransferase family.

It is found in the golgi apparatus membrane. The protein localises to the cell membrane. It localises to the cytoplasm. Its subcellular location is the perinuclear region. The protein resides in the endoplasmic reticulum membrane. It is found in the endoplasmic reticulum-Golgi intermediate compartment membrane. The catalysed reaction is L-cysteinyl-[protein] + hexadecanoyl-CoA = S-hexadecanoyl-L-cysteinyl-[protein] + CoA. The enzyme catalyses L-cysteinyl-[protein] + tetradecanoyl-CoA = S-tetradecanoyl-L-cysteinyl-[protein] + CoA. It catalyses the reaction L-cysteinyl-[protein] + octadecanoyl-CoA = S-octadecanoyl-L-cysteinyl-[protein] + CoA. Its function is as follows. Palmitoyltransferase that could catalyze the addition of palmitate onto various protein substrates. Catalyzes palmitoylation of Cys residues on protein substrates and has a preference for acyl-CoA with C16 fatty acid chains but may also utilize acyl-CoA with C14 and C18 fatty acid chains. This chain is Palmitoyltransferase ZDHHC20-B (zdhhc20b), found in Danio rerio (Zebrafish).